Reading from the N-terminus, the 228-residue chain is Biopolymer transport protein exbB1 (228 aa).

A run of 3 helical transmembrane segments spans residues 11-31 (LGLM…LLAE), 116-136 (LTLI…LGLI), and 158-178 (LGVA…AVAG).

It belongs to the ExbB/TolQ family. As to quaternary structure, the accessory proteins ExbB and ExbD seem to form a complex with TonB.

It is found in the cell inner membrane. Functionally, involved in the TonB-dependent energy-dependent transport of various receptor-bound substrates. Protects ExbD from proteolytic degradation and functionally stabilizes TonB. The chain is Biopolymer transport protein exbB1 (exbB1) from Vibrio cholerae serotype O1 (strain ATCC 39315 / El Tor Inaba N16961).